The chain runs to 447 residues: N-succinylarginine dihydrolase (447 aa).

Residues 19–28 (AGLSFGNKAS), N110, and 137–138 (HR) each bind substrate. E174 is an active-site residue. R212 provides a ligand contact to substrate. The active site involves H248. 2 residues coordinate substrate: D250 and N359. The Nucleophile role is filled by C365.

Belongs to the succinylarginine dihydrolase family. Homodimer.

The enzyme catalyses N(2)-succinyl-L-arginine + 2 H2O + 2 H(+) = N(2)-succinyl-L-ornithine + 2 NH4(+) + CO2. It participates in amino-acid degradation; L-arginine degradation via AST pathway; L-glutamate and succinate from L-arginine: step 2/5. Its function is as follows. Catalyzes the hydrolysis of N(2)-succinylarginine into N(2)-succinylornithine, ammonia and CO(2). This is N-succinylarginine dihydrolase from Escherichia coli O157:H7.